The sequence spans 52 residues: MFRWAIIFAVIALIASLLGFGGVAGLSKDFAVILLVVAVILAIVGFISRGRV.

2 consecutive transmembrane segments (helical) span residues 6 to 26 and 30 to 50; these read IIFA…VAGL and FAVI…ISRG.

The protein belongs to the UPF0391 family.

Its subcellular location is the cell membrane. This is UPF0391 membrane protein ACIAD3602 from Acinetobacter baylyi (strain ATCC 33305 / BD413 / ADP1).